Reading from the N-terminus, the 966-residue chain is Integrator complex subunit 7 (966 aa).

Phosphoserine is present on residues Ser-338 and Ser-809. Positions 941–966 are disordered; sequence LQQQAQQPLQPQPLPQPQPRSAYTRF.

Belongs to the Integrator subunit 7 family. As to quaternary structure, component of the Integrator complex, composed of core subunits INTS1, INTS2, INTS3, INTS4, INTS5, INTS6, INTS7, INTS8, INTS9/RC74, INTS10, INTS11/CPSF3L, INTS12, INTS13, INTS14 and INTS15. The core complex associates with protein phosphatase 2A subunits PPP2CA and PPP2R1A, to form the Integrator-PP2A (INTAC) complex. Interacts with NABP2.

It is found in the nucleus. The protein resides in the chromosome. The protein localises to the cytoplasm. Functionally, component of the integrator complex, a multiprotein complex that terminates RNA polymerase II (Pol II) transcription in the promoter-proximal region of genes. The integrator complex provides a quality checkpoint during transcription elongation by driving premature transcription termination of transcripts that are unfavorably configured for transcriptional elongation: the complex terminates transcription by (1) catalyzing dephosphorylation of the C-terminal domain (CTD) of Pol II subunit POLR2A/RPB1 and SUPT5H/SPT5, (2) degrading the exiting nascent RNA transcript via endonuclease activity and (3) promoting the release of Pol II from bound DNA. The integrator complex is also involved in terminating the synthesis of non-coding Pol II transcripts, such as enhancer RNAs (eRNAs), small nuclear RNAs (snRNAs), telomerase RNAs and long non-coding RNAs (lncRNAs). May be not involved in the recruitment of cytoplasmic dynein to the nuclear envelope by different components of the INT complex. Plays a role in DNA damage response (DDR) signaling during the S phase. The protein is Integrator complex subunit 7 (Ints7) of Mus musculus (Mouse).